A 427-amino-acid chain; its full sequence is MFGRSFPFYNSLGGFYPQSLDARKPPGSGYTSKVRVRDRYHIVGFISSGTYGRVYKAIGKNGQKGEFAIKKFKPDKEGEIIQYTGLSQSAIREMALCSELDHPNVVQLAEIILEDKCIFMVFEYTEHDLLQIIHHHTQPQRHAIPALMVRSILFQLLNGLLYLHTNWVLHRDLKPANILVTSSGAIRIGDLGLARLFYKPLNSLFSGDKVVVTIWYRAPELLMGSRHYTPAVDLWAVGCIFAELLSLRPIFKGEEAKMDSKKTVPFQRNQMMKIIEIMGLPTKEIWPGIVSMPEYSQLQSLAMSRAPGHFNRSSNLEGWYQSCLKNNGYSANSSAGTPGADGFDLLSRLLEYDPTKRITAQEALEHPYFKNGGPISANCFEGFEGKYPHRRVTQDDNDIRSGSLPGTKRSGLPDDSLLGRATKRLKE.

One can recognise a Protein kinase domain in the interval 40-369; that stretch reads YHIVGFISSG…AQEALEHPYF (330 aa). Residues 46-54 and K70 each bind ATP; that span reads ISSGTYGRV. D172 functions as the Proton acceptor in the catalytic mechanism. Basic and acidic residues predominate over residues 390–399; that stretch reads RRVTQDDNDI. Residues 390–427 are disordered; the sequence is RRVTQDDNDIRSGSLPGTKRSGLPDDSLLGRATKRLKE.

Belongs to the protein kinase superfamily. CMGC Ser/Thr protein kinase family. CDC2/CDKX subfamily. In terms of assembly, component of the srb8-11 complex, a regulatory module of the Mediator complex. Requires Mg(2+) as cofactor.

The protein localises to the nucleus. It carries out the reaction L-seryl-[protein] + ATP = O-phospho-L-seryl-[protein] + ADP + H(+). The enzyme catalyses L-threonyl-[protein] + ATP = O-phospho-L-threonyl-[protein] + ADP + H(+). It catalyses the reaction [DNA-directed RNA polymerase] + ATP = phospho-[DNA-directed RNA polymerase] + ADP + H(+). Its function is as follows. Component of the srb8-11 complex. The srb8-11 complex is a regulatory module of the Mediator complex which is itself involved in regulation of basal and activated RNA polymerase II-dependent transcription. The srb8-11 complex may be involved in the transcriptional repression of a subset of genes regulated by Mediator. It may inhibit the association of the Mediator complex with RNA polymerase II to form the holoenzyme complex. The srb8-11 complex phosphorylates the C-terminal domain (CTD) of the largest subunit of RNA polymerase II. This is Serine/threonine-protein kinase ssn3 (ssn3) from Aspergillus niger (strain ATCC MYA-4892 / CBS 513.88 / FGSC A1513).